The following is a 337-amino-acid chain: Anthranilate phosphoribosyltransferase (337 aa).

5-phospho-alpha-D-ribose 1-diphosphate-binding positions include Gly81, 84 to 85 (GD), Ser89, 91 to 94 (NVST), 109 to 117 (KHGNRALSS), and Ala121. An anthranilate-binding site is contributed by Gly81. Ser93 serves as a coordination point for Mg(2+). Asn112 contributes to the anthranilate binding site. Arg167 is a binding site for anthranilate. Mg(2+) is bound by residues Asp226 and Glu227.

The protein belongs to the anthranilate phosphoribosyltransferase family. In terms of assembly, homodimer. Mg(2+) serves as cofactor.

It catalyses the reaction N-(5-phospho-beta-D-ribosyl)anthranilate + diphosphate = 5-phospho-alpha-D-ribose 1-diphosphate + anthranilate. It participates in amino-acid biosynthesis; L-tryptophan biosynthesis; L-tryptophan from chorismate: step 2/5. Its function is as follows. Catalyzes the transfer of the phosphoribosyl group of 5-phosphorylribose-1-pyrophosphate (PRPP) to anthranilate to yield N-(5'-phosphoribosyl)-anthranilate (PRA). The sequence is that of Anthranilate phosphoribosyltransferase from Bradyrhizobium sp. (strain BTAi1 / ATCC BAA-1182).